The chain runs to 432 residues: N-acylneuraminate cytidylyltransferase (432 aa).

Methionine 1 is modified (N-acetylmethionine). Residues 1-38 (MDALEKGAVTSGPAPRGRPSRGRPPKLQRSRGAGRGLE) are disordered. The BC1 motif motif lies at 15 to 31 (PRGRPSRGRPPKLQRSR). Residues 18 to 29 (RPSRGRPPKLQR) show a composition bias toward basic residues. Omega-N-methylarginine occurs at positions 35 and 50. Positions 50, 60, 109, 118, 120, and 141 each coordinate substrate. A BC2 motif motif is present at residues 198 to 204 (KRPRRQD). The active site involves arginine 199. The short motif at 267-274 (KEKLKEIK) is the BC3 motif element.

This sequence belongs to the CMP-NeuNAc synthase family. In terms of assembly, homotetramer; the active enzyme is formed by a dimer of dimers. In terms of tissue distribution, highly expressed in brain and heart, and at intermediate level muscle and liver.

Its subcellular location is the nucleus. The catalysed reaction is an N-acylneuraminate + CTP = a CMP-N-acyl-beta-neuraminate + diphosphate. The protein operates within amino-sugar metabolism; N-acetylneuraminate metabolism. Its function is as follows. Catalyzes the activation of N-acetylneuraminic acid (NeuNAc) to cytidine 5'-monophosphate N-acetylneuraminic acid (CMP-NeuNAc), a substrate required for the addition of sialic acid. Has some activity toward NeuNAc, N-glycolylneuraminic acid (Neu5Gc) or 2-keto-3-deoxy-D-glycero-D-galacto-nononic acid (KDN). This Mus musculus (Mouse) protein is N-acylneuraminate cytidylyltransferase (Cmas).